We begin with the raw amino-acid sequence, 351 residues long: Quinolinate phosphoribosyltransferase [decarboxylating] 2a, mitochondrial (351 aa).

Substrate is bound by residues Arg142, Thr173–Lys175, Arg197, Lys207, Glu240, Asp267, Ser299–Asn301, and Ser320–Ala322.

The protein belongs to the NadC/ModD family. As to expression, expressed in roots and flowers.

The protein resides in the mitochondrion. The catalysed reaction is nicotinate beta-D-ribonucleotide + CO2 + diphosphate = quinolinate + 5-phospho-alpha-D-ribose 1-diphosphate + 2 H(+). The protein operates within alkaloid biosynthesis; nicotine biosynthesis. Its pathway is cofactor biosynthesis; NAD(+) biosynthesis; nicotinate D-ribonucleotide from quinolinate: step 1/1. In terms of biological role, involved in the biosynthesis of pyridine alkaloid natural products, leading mainly to the production of anabasine, anatabine, nicotine and nornicotine, effective deterrents against herbivores with antiparasitic and pesticide properties (neurotoxins); nornicotine serves as the precursor in the synthesis of the carcinogen compound N'-nitrosonornicotine (NNN). Involved in the catabolism of quinolinic acid (QA). This chain is Quinolinate phosphoribosyltransferase [decarboxylating] 2a, mitochondrial, found in Nicotiana tabacum (Common tobacco).